Here is a 1185-residue protein sequence, read N- to C-terminus: AT-rich interactive domain-containing protein 5B (1185 aa).

Disordered stretches follow at residues 248 to 281 (PNLK…ESKA), 413 to 550 (KGEE…PDED), 713 to 742 (ISKK…PIAI), 883 to 932 (HQQE…EGKG), and 1033 to 1058 (HLPK…LHGL). Over residues 252 to 261 (GRPRKKKPCP) the composition is skewed to basic residues. The region spanning 321 to 413 (RADEQAFLVA…LILPYERFIK (93 aa)) is the ARID domain. The segment covering 447–461 (IKNENQKSKKEKDNA) has biased composition (basic and acidic residues). The segment covering 462-471 (QKPQDASEVS) has biased composition (polar residues). Residues 473 to 487 (EQEKDQESADQKNFT) show a composition bias toward basic and acidic residues. The segment covering 1034 to 1053 (LPKETSVKEKVPDAEGEGSK) has biased composition (basic and acidic residues).

Belongs to the ARID5B family.

The protein resides in the nucleus. Its function is as follows. Transcription coactivator that binds to the 5'-AATA[CT]-3' core sequence and plays a key role in adipogenesis and liver development. Required for adipogenesis: regulates triglyceride metabolism in adipocytes by regulating expression of adipogenic genes. The sequence is that of AT-rich interactive domain-containing protein 5B (ARID5B) from Gallus gallus (Chicken).